The following is a 515-amino-acid chain: ATP synthase subunit alpha (515 aa).

Glycine 169–threonine 176 contributes to the ATP binding site.

The protein belongs to the ATPase alpha/beta chains family. F-type ATPases have 2 components, CF(1) - the catalytic core - and CF(0) - the membrane proton channel. CF(1) has five subunits: alpha(3), beta(3), gamma(1), delta(1), epsilon(1). CF(0) has three main subunits: a(1), b(2) and c(9-12). The alpha and beta chains form an alternating ring which encloses part of the gamma chain. CF(1) is attached to CF(0) by a central stalk formed by the gamma and epsilon chains, while a peripheral stalk is formed by the delta and b chains.

Its subcellular location is the cell inner membrane. The catalysed reaction is ATP + H2O + 4 H(+)(in) = ADP + phosphate + 5 H(+)(out). In terms of biological role, produces ATP from ADP in the presence of a proton gradient across the membrane. The alpha chain is a regulatory subunit. This Neisseria gonorrhoeae (strain ATCC 700825 / FA 1090) protein is ATP synthase subunit alpha.